The chain runs to 88 residues: MANSAQARKRARQAVAQNAHNSSLRSRLRTAVKAVRKAIDAGDKAAAAEIFKNSQATIDSIADKKIVHKNKAARHKSRLSAAIKAMAA.

The disordered stretch occupies residues 1-25; that stretch reads MANSAQARKRARQAVAQNAHNSSLR.

It belongs to the bacterial ribosomal protein bS20 family.

Functionally, binds directly to 16S ribosomal RNA. This Cupriavidus pinatubonensis (strain JMP 134 / LMG 1197) (Cupriavidus necator (strain JMP 134)) protein is Small ribosomal subunit protein bS20.